The chain runs to 193 residues: MKIAIYGGSFNPMHIGHEKIVDYVLKNLDMDKIIIIPVGIPSHRENNLEQSDTRLKICKEIFKNNKKVEVSDIEIKAEGKSYTYDTLLKLIEIYGKDNEFFEIIGEDSLKNLKTWRNYKELLNLCKFIVFRRKDDKNIEIDNEFLNNKNIIILENEYYNISSTEIRNKVKNKEDISGLVNKKVKKLIEKEYID.

This sequence belongs to the NadD family.

It carries out the reaction nicotinate beta-D-ribonucleotide + ATP + H(+) = deamido-NAD(+) + diphosphate. It participates in cofactor biosynthesis; NAD(+) biosynthesis; deamido-NAD(+) from nicotinate D-ribonucleotide: step 1/1. In terms of biological role, catalyzes the reversible adenylation of nicotinate mononucleotide (NaMN) to nicotinic acid adenine dinucleotide (NaAD). The chain is Probable nicotinate-nucleotide adenylyltransferase from Fusobacterium nucleatum subsp. nucleatum (strain ATCC 25586 / DSM 15643 / BCRC 10681 / CIP 101130 / JCM 8532 / KCTC 2640 / LMG 13131 / VPI 4355).